Here is a 250-residue protein sequence, read N- to C-terminus: Triosephosphate isomerase (250 aa).

9–11 provides a ligand contact to substrate; that stretch reads NWK. His-95 (electrophile) is an active-site residue. The Proton acceptor role is filled by Glu-167. Substrate is bound by residues Gly-173, Ser-213, and 234–235; that span reads GG.

Belongs to the triosephosphate isomerase family. Homodimer.

Its subcellular location is the cytoplasm. It catalyses the reaction D-glyceraldehyde 3-phosphate = dihydroxyacetone phosphate. Its pathway is carbohydrate biosynthesis; gluconeogenesis. It participates in carbohydrate degradation; glycolysis; D-glyceraldehyde 3-phosphate from glycerone phosphate: step 1/1. Involved in the gluconeogenesis. Catalyzes stereospecifically the conversion of dihydroxyacetone phosphate (DHAP) to D-glyceraldehyde-3-phosphate (G3P). The protein is Triosephosphate isomerase of Chloroflexus aurantiacus (strain ATCC 29366 / DSM 635 / J-10-fl).